The chain runs to 510 residues: MSGWPVLPALLLAVAMSSFHSATSRDEERNRLLMREKMMQVGGQLVLQEEEERANGRLQALKEAEMQEAKRTGIFPPSLHFFQAKGLMEKSAVFNILKKMPKGAALHVHDFGMVSMDWLVKNATYRPYCYFCLTPKGATQFKFAHPPPPTPKQEECSEWVLLEKFRKGLPNVTEFDNSLLRTFTLMTENPQETYANQDMVWKKFKTIFFAISGLVNYAPVFRDFIFLGLEEFYQDQVLYLELRAMLYPVYELNGMVHSREWSVRTYEEVARTFAKTHPGFIGIKLIYSDHRSKDVSLIKESVQRAMELRAKFPQMVAGFDLVGREDTGHSLYDYKEALMIPASRGVKLPYFFHAGETDWQGTSADRNLLDALILNSTRIGHGFALSKHPAVWADAWRKDIPLEVCPISNQVLKLVSDLRNHPAAVLMATGYPMVISSDDPAAFGAKGLSYDFYEAFMGLGGLTADLRTLKQLAMNSIRYSALSETEKKVAMETWEERWHRFVAELTRGPK.

Positions 1 to 24 are cleaved as a signal peptide; sequence MSGWPVLPALLLAVAMSSFHSATS. The dimerization stretch occupies residues 25–95; the sequence is RDEERNRLLM…GLMEKSAVFN (71 aa). Zn(2+)-binding residues include His107 and His109. Asp110 lines the substrate pocket. Asn122 carries N-linked (GlcNAc...) asparagine glycosylation. Positions 122–182 are PRB domain; the sequence is NATYRPYCYF…TEFDNSLLRT (61 aa). Cys132 and Cys156 are oxidised to a cystine. Asn171 is a glycosylation site (N-linked (GlcNAc...) asparagine). Substrate contacts are provided by residues 201-208, His290, and Gly323; that span reads WKKFKTIF. His353 serves as a coordination point for Zn(2+). Catalysis depends on Glu356, which acts as the Proton donor. Asn375 carries an N-linked (GlcNAc...) asparagine glycan. His381 (proton acceptor) is an active-site residue. A Zn(2+)-binding site is contributed by Asp438. Asp439 lines the substrate pocket.

It belongs to the metallo-dependent hydrolases superfamily. Adenosine and AMP deaminases family. ADGF subfamily. As to quaternary structure, homodimer. Interacts with adenosine receptors. Binds heparin. Zn(2+) serves as cofactor.

It is found in the secreted. It carries out the reaction adenosine + H2O + H(+) = inosine + NH4(+). Its function is as follows. Adenosine deaminase that may contribute to the degradation of extracellular adenosine, a signaling molecule that controls a variety of cellular responses. Requires elevated adenosine levels for optimal enzyme activity. Binds to cell surfaces via proteoglycans and may play a role in the regulation of cell proliferation and differentiation, independently of its enzyme activity. This chain is Adenosine deaminase 2, found in Sus scrofa (Pig).